Consider the following 572-residue polypeptide: 2-isopropylmalate synthase (572 aa).

In terms of domain architecture, Pyruvate carboxyltransferase spans P39–N313. Positions 48, 252, 254, and 288 each coordinate Mg(2+). The segment at V445–R572 is regulatory domain.

It belongs to the alpha-IPM synthase/homocitrate synthase family. LeuA type 2 subfamily. Homodimer. Mg(2+) serves as cofactor.

The protein localises to the cytoplasm. The enzyme catalyses 3-methyl-2-oxobutanoate + acetyl-CoA + H2O = (2S)-2-isopropylmalate + CoA + H(+). It functions in the pathway amino-acid biosynthesis; L-leucine biosynthesis; L-leucine from 3-methyl-2-oxobutanoate: step 1/4. Its function is as follows. Catalyzes the condensation of the acetyl group of acetyl-CoA with 3-methyl-2-oxobutanoate (2-ketoisovalerate) to form 3-carboxy-3-hydroxy-4-methylpentanoate (2-isopropylmalate). In Azoarcus sp. (strain BH72), this protein is 2-isopropylmalate synthase.